The chain runs to 206 residues: Probable glutathione S-transferase 9 (206 aa).

Residues 2–79 (VSYKLIYFQS…YLSKQFGISG (78 aa)) form the GST N-terminal domain. Glutathione-binding positions include Y8, W39, K43, 49–51 (GQV), and 63–64 (QS). Residues 81–206 (SSWEEAQVDA…WIEKRPVTSR (126 aa)) form the GST C-terminal domain.

The protein belongs to the GST superfamily. Sigma family.

The catalysed reaction is RX + glutathione = an S-substituted glutathione + a halide anion + H(+). In terms of biological role, conjugation of reduced glutathione to a wide number of exogenous and endogenous hydrophobic electrophiles. The chain is Probable glutathione S-transferase 9 (gst-9) from Caenorhabditis elegans.